A 289-amino-acid chain; its full sequence is MENGYTYEDYKNTAEWLLSHTKHRPQVAIICGSGLGGLTDKLTQAQIFDYGEIPNFPRSTVPGHAGRLVFGFLNGRACVMMQGRFHMYEGYPLWKVTFPVRVFHLLGVDTLVVTNAAGGLNPKFEVGDIMLIRDHINLPGFSGQNPLRGPNDERFGDRFPAMSDAYDRTMRQRALSTWKQMGEQRELQEGTYVMVAGPSFETVAECRVLQKLGADAVGMSTVPEVIVARHCGLRVFGFSLITNKVIMDYESLEKANHEEVLAAGKQAAQKLEQFVSILMASIPLPDKAS.

Met1 is subject to N-acetylmethionine. Phosphate-binding positions include Ser33, His64, and 84–86 (RFH). Tyr88 contacts a purine D-ribonucleoside. Ala116 is a phosphate binding site. Glu201 and Met219 together coordinate a purine D-ribonucleoside. Ser220 contacts phosphate. Residue Asn243 participates in a purine D-ribonucleoside binding. Residue Ser251 is modified to Phosphoserine. His257 contacts a purine D-ribonucleoside.

This sequence belongs to the PNP/MTAP phosphorylase family. As to quaternary structure, homotrimer. Expressed in red blood cells; overexpressed in red blood cells (cytoplasm) of patients with hereditary non-spherocytic hemolytic anemia of unknown etiology.

Its subcellular location is the cytoplasm. It carries out the reaction inosine + phosphate = alpha-D-ribose 1-phosphate + hypoxanthine. It catalyses the reaction guanosine + phosphate = alpha-D-ribose 1-phosphate + guanine. The enzyme catalyses 2'-deoxyguanosine + phosphate = 2-deoxy-alpha-D-ribose 1-phosphate + guanine. The catalysed reaction is 2'-deoxyinosine + phosphate = 2-deoxy-alpha-D-ribose 1-phosphate + hypoxanthine. The protein operates within purine metabolism; purine nucleoside salvage. Inhibited by 5'-deaza-1'-aza-2c-deoxy-1'-(9-methylene)-Immucilin-G (DADMe-ImmG). Functionally, catalyzes the phosphorolytic breakdown of the N-glycosidic bond in the beta-(deoxy)ribonucleoside molecules, with the formation of the corresponding free purine bases and pentose-1-phosphate. Preferentially acts on 6-oxopurine nucleosides including inosine and guanosine. The protein is Purine nucleoside phosphorylase (PNP) of Homo sapiens (Human).